We begin with the raw amino-acid sequence, 298 residues long: N-acetylmuramic acid 6-phosphate etherase (298 aa).

The SIS domain occupies 55 to 218; that stretch reads IHAQVSGGGR…STGLMIKSGK (164 aa). The active-site Proton donor is the Glu-83. Glu-114 is an active-site residue.

It belongs to the GCKR-like family. MurNAc-6-P etherase subfamily. As to quaternary structure, homodimer.

It carries out the reaction N-acetyl-D-muramate 6-phosphate + H2O = N-acetyl-D-glucosamine 6-phosphate + (R)-lactate. It functions in the pathway amino-sugar metabolism; 1,6-anhydro-N-acetylmuramate degradation. It participates in amino-sugar metabolism; N-acetylmuramate degradation. The protein operates within cell wall biogenesis; peptidoglycan recycling. Its function is as follows. Specifically catalyzes the cleavage of the D-lactyl ether substituent of MurNAc 6-phosphate, producing GlcNAc 6-phosphate and D-lactate. Together with AnmK, is also required for the utilization of anhydro-N-acetylmuramic acid (anhMurNAc) either imported from the medium or derived from its own cell wall murein, and thus plays a role in cell wall recycling. In Escherichia fergusonii (strain ATCC 35469 / DSM 13698 / CCUG 18766 / IAM 14443 / JCM 21226 / LMG 7866 / NBRC 102419 / NCTC 12128 / CDC 0568-73), this protein is N-acetylmuramic acid 6-phosphate etherase.